A 62-amino-acid chain; its full sequence is Conotoxin Pn-B02 (62 aa).

The first 19 residues, 1-19 (MRCLPVFIILLLLIASAPS), serve as a signal peptide directing secretion. Positions 20 to 49 (FDALPKTEDNVPLSSFHDNLKRTRRIHLNI) are excised as a propeptide. Ala61 is subject to Alanine amide.

The protein belongs to the conotoxin T superfamily. Contains 2 disulfide bonds that can be either 'C1-C3, C2-C4' or 'C1-C4, C2-C3', since these disulfide connectivities have been observed for conotoxins with cysteine framework V (for examples, see AC P0DQQ7 and AC P81755). As to expression, expressed by the venom duct.

The protein localises to the secreted. In Conus pennaceus (Feathered cone), this protein is Conotoxin Pn-B02.